The primary structure comprises 217 residues: Probable GTP-binding protein EngB (217 aa).

One can recognise an EngB-type G domain in the interval 29–213 (GPSEVAFAGR…RQAIAQTVGI (185 aa)). GTP-binding positions include 37–44 (GRSNVGKS), 64–68 (GRTQE), 91–94 (DMPG), 158–161 (TKTD), and 192–194 (TSS). Mg(2+) is bound by residues S44 and T66.

Belongs to the TRAFAC class TrmE-Era-EngA-EngB-Septin-like GTPase superfamily. EngB GTPase family. Mg(2+) serves as cofactor.

Functionally, necessary for normal cell division and for the maintenance of normal septation. The polypeptide is Probable GTP-binding protein EngB (Rhizobium etli (strain CIAT 652)).